Consider the following 81-residue polypeptide: Acyl carrier protein (81 aa).

Positions 2–80 (SKVDNIEQKV…DVVNYIKEHK (79 aa)) constitute a Carrier domain. O-(pantetheine 4'-phosphoryl)serine is present on serine 40.

It belongs to the acyl carrier protein (ACP) family. Post-translationally, 4'-phosphopantetheine is transferred from CoA to a specific serine of apo-ACP by AcpS. This modification is essential for activity because fatty acids are bound in thioester linkage to the sulfhydryl of the prosthetic group.

The protein resides in the cytoplasm. It participates in lipid metabolism; fatty acid biosynthesis. Functionally, carrier of the growing fatty acid chain in fatty acid biosynthesis. This is Acyl carrier protein from Rickettsia bellii (strain OSU 85-389).